A 554-amino-acid polypeptide reads, in one-letter code: Polyamine aminopropyltransferase 2 (554 aa).

The span at 1 to 13 (MIEPHAPAPPGSP) shows a compositional bias: pro residues. The interval 1–20 (MIEPHAPAPPGSPPSWGGPC) is disordered. 6 consecutive transmembrane segments (helical) span residues 37 to 57 (FLVLAGVFVCAACGLVYELEL), 69 to 89 (VTQASVVLSVMVFAMGLGSLA), 106 to 126 (AALALVGGSSAMLLYAVFAWT), 139 to 159 (ILLVAFSLAIGVLIGAEVPLL), 184 to 204 (VGALVGGLAFPFVLLPFLGQL), and 206 to 226 (GALLTGTVNAVVGAALVLGLF). A spermidine synthase region spans residues 235-516 (RWLLLTANAV…RTAPAPRLDP (282 aa)). The region spanning 247-492 (ALLATATVLA…SVPGPRRAAA (246 aa)) is the PABS domain. Gln-281 serves as a coordination point for S-methyl-5'-thioadenosine. The spermidine site is built by His-313 and Asp-335. Residues Glu-355 and 389-390 (DA) each bind S-methyl-5'-thioadenosine. Catalysis depends on Asp-408, which acts as the Proton acceptor. The segment at 476–495 (DTGPGPGSVPGPRRAAAGPP) is disordered. Residues 485 to 495 (PGPRRAAAGPP) show a composition bias toward low complexity.

The protein belongs to the spermidine/spermine synthase family. As to quaternary structure, homodimer or homotetramer.

Its subcellular location is the cell membrane. It carries out the reaction S-adenosyl 3-(methylsulfanyl)propylamine + putrescine = S-methyl-5'-thioadenosine + spermidine + H(+). It participates in amine and polyamine biosynthesis; spermidine biosynthesis; spermidine from putrescine: step 1/1. Catalyzes the irreversible transfer of a propylamine group from the amino donor S-adenosylmethioninamine (decarboxy-AdoMet) to putrescine (1,4-diaminobutane) to yield spermidine. This Streptomyces coelicolor (strain ATCC BAA-471 / A3(2) / M145) protein is Polyamine aminopropyltransferase 2.